The following is a 176-amino-acid chain: uncharacterized protein (176 aa).

The protein resides in the host cytoplasm. This is an uncharacterized protein from Escherichia phage Mu (Bacteriophage Mu).